We begin with the raw amino-acid sequence, 65 residues long: Small ribosomal subunit protein bS21 (65 aa).

Belongs to the bacterial ribosomal protein bS21 family.

The polypeptide is Small ribosomal subunit protein bS21 (Chlorobium chlorochromatii (strain CaD3)).